A 491-amino-acid chain; its full sequence is Protein phosphatase ppm-1.G (491 aa).

A PPM-type phosphatase domain is found at 23 to 486 (SYACTTMQGW…DNMTVICTTF (464 aa)). 2 residues coordinate Mn(2+): D57 and G58. Positions 112–125 (KDIGDEGKPKKAGG) are enriched in basic and acidic residues. Disordered regions lie at residues 112–136 (KDIGDEGKPKKAGGEADSEDEADRI) and 170–294 (GDVS…EEMV). Acidic residues-rich tracts occupy residues 173-192 (SDDSEDEDEDEEEAEEQDDT) and 260-294 (ATEEEDEDDSDKEFVADEEEDDEDAEDEQSDEEMV). 2 residues coordinate Mn(2+): D428 and D477.

Belongs to the PP2C family. Mg(2+) serves as cofactor. The cofactor is Mn(2+).

The catalysed reaction is O-phospho-L-seryl-[protein] + H2O = L-seryl-[protein] + phosphate. The enzyme catalyses O-phospho-L-threonyl-[protein] + H2O = L-threonyl-[protein] + phosphate. This Caenorhabditis elegans protein is Protein phosphatase ppm-1.G.